We begin with the raw amino-acid sequence, 335 residues long: Cell division protein ZipA (335 aa).

Over 1–4 (MDLN) the chain is Periplasmic. Residues 5–25 (AILIILGVIALIILVAHGIWS) form a helical membrane-spanning segment. The Cytoplasmic portion of the chain corresponds to 26–335 (NRREKSQYFE…AERDYLARVS (310 aa)).

It belongs to the ZipA family. As to quaternary structure, interacts with FtsZ via their C-terminal domains.

The protein localises to the cell inner membrane. In terms of biological role, essential cell division protein that stabilizes the FtsZ protofilaments by cross-linking them and that serves as a cytoplasmic membrane anchor for the Z ring. Also required for the recruitment to the septal ring of downstream cell division proteins. This Histophilus somni (strain 2336) (Haemophilus somnus) protein is Cell division protein ZipA.